The chain runs to 205 residues: Ras-related and estrogen-regulated growth inhibitor-like protein (205 aa).

The small GTPase-like stretch occupies residues 1-205; sequence MSNFLHLKYN…NVFGKRRKSV (205 aa). Residues 11–18, 58–64, and 123–126 contribute to the GTP site; these read EKSVSVTK, DPCSQTQ, and NKRD.

Belongs to the small GTPase superfamily. Ras family.

The enzyme catalyses GTP + H2O = GDP + phosphate + H(+). Functionally, binds GDP/GTP and may possess intrinsic GTPase activity. The polypeptide is Ras-related and estrogen-regulated growth inhibitor-like protein (RERGL) (Homo sapiens (Human)).